Reading from the N-terminus, the 185-residue chain is Large ribosomal subunit protein uL5 (185 aa).

Belongs to the universal ribosomal protein uL5 family. In terms of assembly, part of the 50S ribosomal subunit; contacts the 5S rRNA and probably tRNA. Forms a bridge to the 30S subunit in the 70S ribosome.

Functionally, this is one of the proteins that bind and probably mediate the attachment of the 5S RNA into the large ribosomal subunit, where it forms part of the central protuberance. In the 70S ribosome it contacts protein S13 of the 30S subunit (bridge B1b), connecting the 2 subunits; this bridge is implicated in subunit movement. May contact the P site tRNA; the 5S rRNA and some of its associated proteins might help stabilize positioning of ribosome-bound tRNAs. This Haloquadratum walsbyi (strain DSM 16790 / HBSQ001) protein is Large ribosomal subunit protein uL5.